Reading from the N-terminus, the 173-residue chain is Calcium-binding protein 5 (173 aa).

EF-hand domains lie at 28 to 63 (DELD…MGYM), 82 to 99 (GRVD…KLLA), 105 to 140 (IGVQ…LLGE), and 142 to 173 (LTPR…MMSR). Residues Asp41, Asp43, Asp45, and Asp52 each coordinate Ca(2+). Ca(2+) contacts are provided by Asp118, Asn120, Asp122, Glu124, Glu129, Asp155, Asn157, Asp159, Thr161, and Glu166.

In terms of assembly, interacts with CACNA1C (via C-terminal CDB motif) in a calcium-dependent manner. Interacts with STXBP1. Interacts with MYO6. As to expression, expressed in inner and outer plexiform layers of the retina, and retinal bipolar cells (at protein level). Expressed in the inner hair cells (IHC) of the cochlea.

The protein localises to the cytoplasm. Functionally, inhibits calcium-dependent inactivation of L-type calcium channel and shifts voltage dependence of activation to more depolarized membrane potentials. Involved in the transmission of light signals. May positively regulate neurotransmitter vesicle endocytosis and exocytosis in a salt-dependent manner. May play a role in the extension and network organization of neurites. The polypeptide is Calcium-binding protein 5 (Cabp5) (Mus musculus (Mouse)).